The chain runs to 342 residues: MKVEDFDFDLPEELIAQTPLLDRTSSRLMVLDKESGDIKDQHFTDIISYLNEGDALVLNDTRVLPARLHGIKDETGAHIEVLLLKQKEGNAWETLVKPAKRIRKGATITFGDGALKATCLEELEHGGRILEFSYEGIFYEVLEQLGEMPLPPYIKEQLADQDRYQTVYAKENGSAAAPTAGLHFTEDLLEQISAKGVEIIFVTLHVGLGTFRPVDVEDTTNHKMHSEFYRLTEESAERINKIKAQGGKVVAVGTTSIRTLETIASRHDGKLVAESGWTEIFISPGYTFQAVDALITNFHLPKSTLIMLVSALSDRTKILAAYNHAVEEQYRFFSFGDAMFIH.

It belongs to the QueA family. In terms of assembly, monomer.

Its subcellular location is the cytoplasm. It carries out the reaction 7-aminomethyl-7-carbaguanosine(34) in tRNA + S-adenosyl-L-methionine = epoxyqueuosine(34) in tRNA + adenine + L-methionine + 2 H(+). The protein operates within tRNA modification; tRNA-queuosine biosynthesis. Functionally, transfers and isomerizes the ribose moiety from AdoMet to the 7-aminomethyl group of 7-deazaguanine (preQ1-tRNA) to give epoxyqueuosine (oQ-tRNA). This Listeria monocytogenes serovar 1/2a (strain ATCC BAA-679 / EGD-e) protein is S-adenosylmethionine:tRNA ribosyltransferase-isomerase.